The chain runs to 744 residues: Vesicle-fusing ATPase (744 aa).

Position 105 is an N6-acetyllysine (lysine 105). Serine 207 is modified (phosphoserine). At tyrosine 259 the chain carries Phosphotyrosine. Residues 505–510 (NGIIKW) and 545–552 (PHSGKTAL) each bind ATP. Threonine 550 provides a ligand contact to Mg(2+). Serine 569 is subject to Phosphoserine; by CDK16.

Belongs to the AAA ATPase family. In terms of assembly, homohexamer. Interacts with GABARAP and GABARAPL2. Interacts with GRIA2. Interacts with PLK2, leading to disrupt the interaction with GRIA2. Interacts with MUSK; may regulate MUSK endocytosis and activity. Interacts with CDK16. Mg(2+) is required as a cofactor. Phosphorylation at Ser-569 interferes with homohexamerization. As to expression, detected in brain (at protein level).

Its subcellular location is the cytoplasm. It catalyses the reaction ATP + H2O = ADP + phosphate + H(+). Required for vesicle-mediated transport. Catalyzes the fusion of transport vesicles within the Golgi cisternae. Is also required for transport from the endoplasmic reticulum to the Golgi stack. Seems to function as a fusion protein required for the delivery of cargo proteins to all compartments of the Golgi stack independent of vesicle origin. Interaction with AMPAR subunit GRIA2 leads to influence GRIA2 membrane cycling. This Rattus norvegicus (Rat) protein is Vesicle-fusing ATPase (Nsf).